The primary structure comprises 242 residues: Protein GrpE (242 aa).

Disordered stretches follow at residues Met-1–Leu-75 and Val-93–Lys-136. Residues Asp-23–Asp-37 show a composition bias toward low complexity. A compositionally biased stretch (acidic residues) spans Ala-38 to Ala-49. Over residues Gly-50–Val-64 the composition is skewed to polar residues. Positions Leu-96 to Ser-108 are enriched in acidic residues. The span at Tyr-124–Gln-133 shows a compositional bias: basic residues.

The protein belongs to the GrpE family. As to quaternary structure, homodimer.

The protein resides in the cytoplasm. Functionally, participates actively in the response to hyperosmotic and heat shock by preventing the aggregation of stress-denatured proteins, in association with DnaK and GrpE. It is the nucleotide exchange factor for DnaK and may function as a thermosensor. Unfolded proteins bind initially to DnaJ; upon interaction with the DnaJ-bound protein, DnaK hydrolyzes its bound ATP, resulting in the formation of a stable complex. GrpE releases ADP from DnaK; ATP binding to DnaK triggers the release of the substrate protein, thus completing the reaction cycle. Several rounds of ATP-dependent interactions between DnaJ, DnaK and GrpE are required for fully efficient folding. This is Protein GrpE from Haloferax mediterranei (strain ATCC 33500 / DSM 1411 / JCM 8866 / NBRC 14739 / NCIMB 2177 / R-4) (Halobacterium mediterranei).